The sequence spans 289 residues: ATP synthase gamma chain (289 aa).

It belongs to the ATPase gamma chain family. F-type ATPases have 2 components, CF(1) - the catalytic core - and CF(0) - the membrane proton channel. CF(1) has five subunits: alpha(3), beta(3), gamma(1), delta(1), epsilon(1). CF(0) has three main subunits: a, b and c.

The protein resides in the cell inner membrane. Its function is as follows. Produces ATP from ADP in the presence of a proton gradient across the membrane. The gamma chain is believed to be important in regulating ATPase activity and the flow of protons through the CF(0) complex. This is ATP synthase gamma chain from Cereibacter sphaeroides (strain ATCC 17025 / ATH 2.4.3) (Rhodobacter sphaeroides).